Here is a 429-residue protein sequence, read N- to C-terminus: tRNA modification GTPase MnmE (429 aa).

(6S)-5-formyl-5,6,7,8-tetrahydrofolate is bound by residues arginine 20, glutamate 77, and arginine 117. The 141-residue stretch at 213 to 353 folds into the TrmE-type G domain; it reads GFEVAILGAP…LVKAVSHRLS (141 aa). K(+) is bound at residue asparagine 223. GTP is bound by residues 223 to 228, 242 to 248, and 267 to 270; these read NVGKSS, SSIAGTT, and DTAG. Mg(2+) is bound at residue serine 227. Residues serine 242, isoleucine 244, and threonine 247 each contribute to the K(+) site. Position 248 (threonine 248) interacts with Mg(2+). Lysine 429 is a (6S)-5-formyl-5,6,7,8-tetrahydrofolate binding site.

The protein belongs to the TRAFAC class TrmE-Era-EngA-EngB-Septin-like GTPase superfamily. TrmE GTPase family. Homodimer. Heterotetramer of two MnmE and two MnmG subunits. It depends on K(+) as a cofactor.

The protein localises to the cytoplasm. Functionally, exhibits a very high intrinsic GTPase hydrolysis rate. Involved in the addition of a carboxymethylaminomethyl (cmnm) group at the wobble position (U34) of certain tRNAs, forming tRNA-cmnm(5)s(2)U34. The chain is tRNA modification GTPase MnmE from Dinoroseobacter shibae (strain DSM 16493 / NCIMB 14021 / DFL 12).